We begin with the raw amino-acid sequence, 86 residues long: Large ribosomal subunit protein bL31B (86 aa).

Belongs to the bacterial ribosomal protein bL31 family. Type B subfamily. In terms of assembly, part of the 50S ribosomal subunit.

This Vibrio parahaemolyticus serotype O3:K6 (strain RIMD 2210633) protein is Large ribosomal subunit protein bL31B.